We begin with the raw amino-acid sequence, 276 residues long: Pantothenate synthetase (276 aa).

27–34 (MGALHRGH) serves as a coordination point for ATP. His-34 (proton donor) is an active-site residue. Gln-58 serves as a coordination point for (R)-pantoate. Gln-58 contributes to the beta-alanine binding site. 147-150 (GKKD) lines the ATP pocket. Gln-153 lines the (R)-pantoate pocket. ATP-binding positions include Val-176 and 184 to 187 (LSSR).

It belongs to the pantothenate synthetase family. In terms of assembly, homodimer.

It is found in the cytoplasm. The enzyme catalyses (R)-pantoate + beta-alanine + ATP = (R)-pantothenate + AMP + diphosphate + H(+). Its pathway is cofactor biosynthesis; (R)-pantothenate biosynthesis; (R)-pantothenate from (R)-pantoate and beta-alanine: step 1/1. In terms of biological role, catalyzes the condensation of pantoate with beta-alanine in an ATP-dependent reaction via a pantoyl-adenylate intermediate. The chain is Pantothenate synthetase from Helicobacter pylori (strain J99 / ATCC 700824) (Campylobacter pylori J99).